A 321-amino-acid chain; its full sequence is tRNA U34 carboxymethyltransferase (321 aa).

Residues Lys-90, Trp-104, Lys-109, Gly-129, 151–153 (DPT), 180–181 (IE), Met-195, Tyr-199, and Arg-314 each bind carboxy-S-adenosyl-L-methionine.

The protein belongs to the class I-like SAM-binding methyltransferase superfamily. CmoB family. As to quaternary structure, homotetramer.

The enzyme catalyses carboxy-S-adenosyl-L-methionine + 5-hydroxyuridine(34) in tRNA = 5-carboxymethoxyuridine(34) in tRNA + S-adenosyl-L-homocysteine + H(+). Its function is as follows. Catalyzes carboxymethyl transfer from carboxy-S-adenosyl-L-methionine (Cx-SAM) to 5-hydroxyuridine (ho5U) to form 5-carboxymethoxyuridine (cmo5U) at position 34 in tRNAs. This chain is tRNA U34 carboxymethyltransferase, found in Pasteurella multocida (strain Pm70).